A 365-amino-acid polypeptide reads, in one-letter code: Flagellin 1 (365 aa).

Belongs to the bacterial flagellin family.

It is found in the secreted. Its subcellular location is the bacterial flagellum. Flagellin is the subunit protein which polymerizes to form the filaments of bacterial flagella. In Proteus mirabilis, this protein is Flagellin 1 (fliC1).